Reading from the N-terminus, the 136-residue chain is Peptide methionine sulfoxide reductase MsrB (136 aa).

Residues 6-128 (EVSLYKELTD…NSAALSFTDE (123 aa)) form the MsrB domain. The Zn(2+) site is built by cysteine 45, cysteine 48, cysteine 94, and cysteine 97. Catalysis depends on cysteine 117, which acts as the Nucleophile.

The protein belongs to the MsrB Met sulfoxide reductase family. Requires Zn(2+) as cofactor.

The catalysed reaction is L-methionyl-[protein] + [thioredoxin]-disulfide + H2O = L-methionyl-(R)-S-oxide-[protein] + [thioredoxin]-dithiol. This is Peptide methionine sulfoxide reductase MsrB from Photorhabdus laumondii subsp. laumondii (strain DSM 15139 / CIP 105565 / TT01) (Photorhabdus luminescens subsp. laumondii).